Here is a 358-residue protein sequence, read N- to C-terminus: Cinnamyl alcohol dehydrogenase 1 (358 aa).

The 329-residue stretch at glycine 21–valine 349 folds into the Enoyl reductase (ER) domain. Zn(2+) is bound at residue cysteine 48. Serine 50 is an NADP(+) binding site. Histidine 70, glutamate 71, cysteine 101, cysteine 104, cysteine 107, cysteine 115, and cysteine 164 together coordinate Zn(2+). NADP(+) contacts are provided by residues threonine 168, glycine 189–glycine 194, serine 212–lysine 217, threonine 252, glycine 276, and serine 299–valine 301.

It belongs to the zinc-containing alcohol dehydrogenase family. In terms of assembly, homodimer. Requires Zn(2+) as cofactor.

It carries out the reaction (E)-cinnamyl alcohol + NADP(+) = (E)-cinnamaldehyde + NADPH + H(+). It catalyses the reaction (E)-coniferol + NADP(+) = (E)-coniferaldehyde + NADPH + H(+). The catalysed reaction is (E)-sinapyl alcohol + NADP(+) = (E)-sinapaldehyde + NADPH + H(+). The enzyme catalyses (E)-4-coumaroyl alcohol + NADP(+) = (E)-4-coumaraldehyde + NADPH + H(+). Its pathway is aromatic compound metabolism; phenylpropanoid biosynthesis. Its function is as follows. Involved in lignin biosynthesis. Catalyzes the final step specific for the production of lignin monomers. Catalyzes the NADPH-dependent reduction of coniferaldehyde, 5-hydroxyconiferaldehyde, sinapaldehyde, 4-coumaraldehyde and caffeyl aldehyde to their respective alcohols. Can use coumaraldehyde and, with a lower efficiency, coniferaldehyde and sinapaldehyde as substrates. This is Cinnamyl alcohol dehydrogenase 1 from Medicago truncatula (Barrel medic).